The primary structure comprises 319 residues: Malate dehydrogenase (319 aa).

NAD(+)-binding positions include 10–15 (GAGNIG) and aspartate 34. Residues arginine 83 and arginine 89 each coordinate substrate. Residues asparagine 96 and 119 to 121 (ITN) contribute to the NAD(+) site. Residues asparagine 121 and arginine 152 each contribute to the substrate site. Histidine 176 functions as the Proton acceptor in the catalytic mechanism.

This sequence belongs to the LDH/MDH superfamily. MDH type 3 family.

It carries out the reaction (S)-malate + NAD(+) = oxaloacetate + NADH + H(+). Functionally, catalyzes the reversible oxidation of malate to oxaloacetate. The protein is Malate dehydrogenase of Francisella philomiragia subsp. philomiragia (strain ATCC 25017 / CCUG 19701 / FSC 153 / O#319-036).